The primary structure comprises 146 residues: Hemoglobin subunit beta (146 aa).

At Val1 the chain carries N-acetylvaline. The 145-residue stretch at 2 to 146 folds into the Globin domain; that stretch reads HLTGEEKSAV…VANALAHKYH (145 aa). Thr12 is subject to Phosphothreonine. Ser44 is subject to Phosphoserine. Lys59 is subject to N6-acetyllysine. Position 63 (His63) interacts with heme b. At Lys82 the chain carries N6-acetyllysine. Position 92 (His92) interacts with heme b. Residue Cys93 is modified to S-nitrosocysteine. An N6-acetyllysine modification is found at Lys144.

This sequence belongs to the globin family. Heterotetramer of two alpha chains and two beta chains. As to expression, red blood cells.

Functionally, involved in oxygen transport from the lung to the various peripheral tissues. This Saguinus oedipus (Cotton-top tamarin) protein is Hemoglobin subunit beta (HBB).